Reading from the N-terminus, the 162-residue chain is Phosphopantetheine adenylyltransferase (162 aa).

S11 is a substrate binding site. ATP-binding positions include 11–12 (SF) and H19. 3 residues coordinate substrate: K43, V76, and R90. Residues 91-93 (GLR), E101, and 126-132 (HLYISSS) each bind ATP.

The protein belongs to the bacterial CoaD family. In terms of assembly, homohexamer. Requires Mg(2+) as cofactor.

Its subcellular location is the cytoplasm. The enzyme catalyses (R)-4'-phosphopantetheine + ATP + H(+) = 3'-dephospho-CoA + diphosphate. It participates in cofactor biosynthesis; coenzyme A biosynthesis; CoA from (R)-pantothenate: step 4/5. Its function is as follows. Reversibly transfers an adenylyl group from ATP to 4'-phosphopantetheine, yielding dephospho-CoA (dPCoA) and pyrophosphate. The protein is Phosphopantetheine adenylyltransferase of Streptococcus pneumoniae (strain CGSP14).